A 166-amino-acid chain; its full sequence is Putative universal stress protein SE_1385 (166 aa).

It belongs to the universal stress protein A family.

The protein localises to the cytoplasm. This chain is Putative universal stress protein SE_1385, found in Staphylococcus epidermidis (strain ATCC 12228 / FDA PCI 1200).